A 238-amino-acid chain; its full sequence is Transcriptional activator protein AnoR (238 aa).

The 67-residue stretch at 170-236 (EFSQFNLYLT…SAAIRAVMLG (67 aa)) folds into the HTH luxR-type domain. Positions 195 to 214 (SAEIAQIIGVTERTVNFHLC) form a DNA-binding region, H-T-H motif.

It belongs to the autoinducer-regulated transcriptional regulatory protein family.

Functionally, positively regulates the expression of anoI. Required for biofilm formation and motility. Probably part of a quorum-sensing system with AnoI. The polypeptide is Transcriptional activator protein AnoR (Acinetobacter nosocomialis).